A 257-amino-acid polypeptide reads, in one-letter code: Imidazole glycerol phosphate synthase subunit HisF (257 aa).

Active-site residues include aspartate 11 and aspartate 130.

This sequence belongs to the HisA/HisF family. As to quaternary structure, heterodimer of HisH and HisF.

The protein localises to the cytoplasm. It catalyses the reaction 5-[(5-phospho-1-deoxy-D-ribulos-1-ylimino)methylamino]-1-(5-phospho-beta-D-ribosyl)imidazole-4-carboxamide + L-glutamine = D-erythro-1-(imidazol-4-yl)glycerol 3-phosphate + 5-amino-1-(5-phospho-beta-D-ribosyl)imidazole-4-carboxamide + L-glutamate + H(+). Its pathway is amino-acid biosynthesis; L-histidine biosynthesis; L-histidine from 5-phospho-alpha-D-ribose 1-diphosphate: step 5/9. Its function is as follows. IGPS catalyzes the conversion of PRFAR and glutamine to IGP, AICAR and glutamate. The HisF subunit catalyzes the cyclization activity that produces IGP and AICAR from PRFAR using the ammonia provided by the HisH subunit. The polypeptide is Imidazole glycerol phosphate synthase subunit HisF (Psychromonas ingrahamii (strain DSM 17664 / CCUG 51855 / 37)).